A 304-amino-acid chain; its full sequence is Probable actin-related protein 2/3 complex subunit 2 (304 aa).

It belongs to the ARPC2 family. In terms of assembly, component of the Arp2/3 complex.

The protein localises to the cytoplasm. It is found in the cytoskeleton. Functionally, functions as actin-binding component of the Arp2/3 complex which is involved in regulation of actin polymerization and together with an activating nucleation-promoting factor (NPF) mediates the formation of branched actin networks. Seems to contact the mother actin filament. The chain is Probable actin-related protein 2/3 complex subunit 2 (Arc-p34) from Anopheles gambiae (African malaria mosquito).